Reading from the N-terminus, the 243-residue chain is UPF0502 protein Rmet_3697 (243 aa).

The segment covering 1–11 (MTDTPDTPDTP) has biased composition (low complexity). Residues 1–23 (MTDTPDTPDTPMATGASSRPPLR) form a disordered region.

Belongs to the UPF0502 family.

The protein is UPF0502 protein Rmet_3697 of Cupriavidus metallidurans (strain ATCC 43123 / DSM 2839 / NBRC 102507 / CH34) (Ralstonia metallidurans).